Consider the following 277-residue polypeptide: Glutamate racemase (277 aa).

Residues 13–14 (DS) and 45–46 (YG) each bind substrate. The active-site Proton donor/acceptor is Cys77. Substrate is bound at residue 78-79 (NT). Residue Cys192 is the Proton donor/acceptor of the active site. Residue 193 to 194 (TH) coordinates substrate.

Belongs to the aspartate/glutamate racemases family.

It catalyses the reaction L-glutamate = D-glutamate. Its pathway is cell wall biogenesis; peptidoglycan biosynthesis. Functionally, provides the (R)-glutamate required for cell wall biosynthesis. The protein is Glutamate racemase of Rhizobium meliloti (strain 1021) (Ensifer meliloti).